Here is a 488-residue protein sequence, read N- to C-terminus: Protein nucleotidyltransferase YdiU (488 aa).

Residues Gly-91, Gly-93, Arg-94, Lys-114, Asp-126, Gly-127, Arg-177, and Arg-184 each coordinate ATP. Asp-253 functions as the Proton acceptor in the catalytic mechanism. Mg(2+)-binding residues include Asn-254 and Asp-263. Asp-263 lines the ATP pocket.

It belongs to the SELO family. Mg(2+) is required as a cofactor. The cofactor is Mn(2+).

It catalyses the reaction L-seryl-[protein] + ATP = 3-O-(5'-adenylyl)-L-seryl-[protein] + diphosphate. The enzyme catalyses L-threonyl-[protein] + ATP = 3-O-(5'-adenylyl)-L-threonyl-[protein] + diphosphate. The catalysed reaction is L-tyrosyl-[protein] + ATP = O-(5'-adenylyl)-L-tyrosyl-[protein] + diphosphate. It carries out the reaction L-histidyl-[protein] + UTP = N(tele)-(5'-uridylyl)-L-histidyl-[protein] + diphosphate. It catalyses the reaction L-seryl-[protein] + UTP = O-(5'-uridylyl)-L-seryl-[protein] + diphosphate. The enzyme catalyses L-tyrosyl-[protein] + UTP = O-(5'-uridylyl)-L-tyrosyl-[protein] + diphosphate. Its function is as follows. Nucleotidyltransferase involved in the post-translational modification of proteins. It can catalyze the addition of adenosine monophosphate (AMP) or uridine monophosphate (UMP) to a protein, resulting in modifications known as AMPylation and UMPylation. This is Protein nucleotidyltransferase YdiU from Bacillus mycoides (strain KBAB4) (Bacillus weihenstephanensis).